A 531-amino-acid chain; its full sequence is GTPase Obg (531 aa).

Residues 2–159 (ASFVDRVIVH…QEVELELKSI (158 aa)) form the Obg domain. The OBG-type G domain maps to 160-341 (ADIALVGFPS…LSFAMAALVS (182 aa)). GTP-binding positions include 166 to 173 (GFPSAGKS), 191 to 195 (FTTLV), 212 to 215 (DVPG), 293 to 296 (NKVD), and 322 to 324 (STA). Positions 173 and 193 each coordinate Mg(2+). A disordered region spans residues 346–365 (QEEQREQQRQTVPVLQPEPV). The region spanning 368–453 (RRGRDRREFV…ENGVVFDWEP (86 aa)) is the OCT domain. The interval 459–531 (AELLGGPRGS…TSETKETNEK (73 aa)) is disordered. Basic and acidic residues-rich tracts occupy residues 468-507 (SDLR…ERRA) and 514-531 (VDAR…TNEK).

Belongs to the TRAFAC class OBG-HflX-like GTPase superfamily. OBG GTPase family. In terms of assembly, monomer. Requires Mg(2+) as cofactor.

It is found in the cytoplasm. Functionally, an essential GTPase which binds GTP, GDP and possibly (p)ppGpp with moderate affinity, with high nucleotide exchange rates and a fairly low GTP hydrolysis rate. Plays a role in control of the cell cycle, stress response, ribosome biogenesis and in those bacteria that undergo differentiation, in morphogenesis control. The polypeptide is GTPase Obg (Kocuria rhizophila (strain ATCC 9341 / DSM 348 / NBRC 103217 / DC2201)).